The sequence spans 437 residues: Ribosomal protein uS12 methylthiotransferase RimO (437 aa).

Positions 5–116 (PTISVSHLGC…IAEVIQRVET (112 aa)) constitute an MTTase N-terminal domain. Residues Cys14, Cys50, Cys79, Cys154, Cys158, and Cys161 each contribute to the [4Fe-4S] cluster site. The Radical SAM core domain occupies 140-369 (TTNEAVAYLR…MEIQQPIAAK (230 aa)). The 66-residue stretch at 372 to 437 (QKCVGQTVEV…DVYDLYGKVI (66 aa)) folds into the TRAM domain.

Belongs to the methylthiotransferase family. RimO subfamily. [4Fe-4S] cluster serves as cofactor.

The protein localises to the cytoplasm. The enzyme catalyses L-aspartate(89)-[ribosomal protein uS12]-hydrogen + (sulfur carrier)-SH + AH2 + 2 S-adenosyl-L-methionine = 3-methylsulfanyl-L-aspartate(89)-[ribosomal protein uS12]-hydrogen + (sulfur carrier)-H + 5'-deoxyadenosine + L-methionine + A + S-adenosyl-L-homocysteine + 2 H(+). Its function is as follows. Catalyzes the methylthiolation of an aspartic acid residue of ribosomal protein uS12. In Crocosphaera subtropica (strain ATCC 51142 / BH68) (Cyanothece sp. (strain ATCC 51142)), this protein is Ribosomal protein uS12 methylthiotransferase RimO.